The primary structure comprises 122 residues: Immunoglobulin lambda variable 4-3 (122 aa).

Residues 1–19 form the signal peptide; the sequence is MAWVSFYLLPFIFSTGLCA. A framework-1 region spans residues 20–44; it reads LPVLTQPPSASALLGASIKLTCTLS. The region spanning 21-122 is the Ig-like domain; the sequence is PVLTQPPSAS…ESHTIDGQVG (102 aa). Cys41 and Cys111 are joined by a disulfide. A complementarity-determining-1 region spans residues 45 to 51; the sequence is SEHSTYT. The interval 52–68 is framework-2; that stretch reads IEWYQQRPGRSPQYIMK. The tract at residues 69 to 75 is complementarity-determining-2; that stretch reads VKSDGSH. The segment at 76–111 is framework-3; that stretch reads SKGDGIPDRFMGSSSGADRYLTFSNLQSDDEAEYHC. Positions 112–122 are complementarity-determining-3; the sequence is GESHTIDGQVG.

As to quaternary structure, immunoglobulins are composed of two identical heavy chains and two identical light chains; disulfide-linked.

It localises to the secreted. The protein resides in the cell membrane. Its function is as follows. V region of the variable domain of immunoglobulin light chains that participates in the antigen recognition. Immunoglobulins, also known as antibodies, are membrane-bound or secreted glycoproteins produced by B lymphocytes. In the recognition phase of humoral immunity, the membrane-bound immunoglobulins serve as receptors which, upon binding of a specific antigen, trigger the clonal expansion and differentiation of B lymphocytes into immunoglobulins-secreting plasma cells. Secreted immunoglobulins mediate the effector phase of humoral immunity, which results in the elimination of bound antigens. The antigen binding site is formed by the variable domain of one heavy chain, together with that of its associated light chain. Thus, each immunoglobulin has two antigen binding sites with remarkable affinity for a particular antigen. The variable domains are assembled by a process called V-(D)-J rearrangement and can then be subjected to somatic hypermutations which, after exposure to antigen and selection, allow affinity maturation for a particular antigen. This Homo sapiens (Human) protein is Immunoglobulin lambda variable 4-3.